The sequence spans 148 residues: Large ribosomal subunit protein uL15 (148 aa).

The interval 1–47 (MTKLEDLRPTPGSVKPRKRVGRGIGSGHGKTSGRGHKGQKSRGSGKV) is disordered. Over residues 31 to 45 (TSGRGHKGQKSRGSG) the composition is skewed to basic residues.

This sequence belongs to the universal ribosomal protein uL15 family. Part of the 50S ribosomal subunit.

Functionally, binds to the 23S rRNA. This is Large ribosomal subunit protein uL15 from Pseudothermotoga lettingae (strain ATCC BAA-301 / DSM 14385 / NBRC 107922 / TMO) (Thermotoga lettingae).